We begin with the raw amino-acid sequence, 133 residues long: Small ribosomal subunit protein uS8c (133 aa).

Disordered regions lie at residues M1 to T23 and F44 to R133. Composition is skewed to polar residues over residues A12–T23 and T55–Q66. The span at G67 to S81 shows a compositional bias: basic residues. Basic and acidic residues predominate over residues T114–R133.

This sequence belongs to the universal ribosomal protein uS8 family. As to quaternary structure, part of the 30S ribosomal subunit.

Its subcellular location is the plastid. It localises to the chloroplast. Functionally, one of the primary rRNA binding proteins, it binds directly to 16S rRNA central domain where it helps coordinate assembly of the platform of the 30S subunit. The chain is Small ribosomal subunit protein uS8c (rps8) from Selaginella uncinata (Blue spike-moss).